The sequence spans 513 residues: MTNNVITRFAPSPSGFLHIGSARTALFNYLFARHHNGKFLLRIEDTDKERSTKEAVETIFSGLKWLGLDWNGEVIFQSKRNNLYKEAALKLLQNGKAYYCFTSQEEIERQRQQALENKQHFIFNSEWRDKDPSIYPTDIKPVIRLKTPREGSITIHDTLQGEVVIENSHIDDMVLLRADGTATYMLAVVVDDHDMGITHIIRGDDHLTNAARQLAIYQAFGYEVPSMTHIPLIHGADGAKLSKRHGALGVETYKDMGYLPESLCNYLLRLGWSHGDDEIISMTQAIDWFNLDSLGKSPSKLDFAKMNSLNAHYLRMLDNDSLTSKTVEILEQNYNKLLRKLAYRKEFEGNTERSTAAYIDIREDASTGLTYKLPLTVELPKKFKVSEQEIGYIKQAMPSLLVRSATLLELTRLAQIYLVDSPIIYNQDAKKIIENCDKNLIKQVIENLSELEQFDKESVQNKFKEIAAANDLKLNDIMPPVRALITGMTASPSVFEIAEILGKENILKRLKII.

A 'HIGH' region motif is present at residues 11–21 (PSPSGFLHIGS). The 'KMSKS' region signature appears at 240-244 (KLSKR). K243 is an ATP binding site.

This sequence belongs to the class-I aminoacyl-tRNA synthetase family. Glutamate--tRNA ligase type 1 subfamily. As to quaternary structure, monomer.

The protein resides in the cytoplasm. The catalysed reaction is tRNA(Glu) + L-glutamate + ATP = L-glutamyl-tRNA(Glu) + AMP + diphosphate. Its function is as follows. Catalyzes the attachment of glutamate to tRNA(Glu) in a two-step reaction: glutamate is first activated by ATP to form Glu-AMP and then transferred to the acceptor end of tRNA(Glu). This Rickettsia massiliae (strain Mtu5) protein is Glutamate--tRNA ligase 2.